A 703-amino-acid chain; its full sequence is Elongation factor G 1 (703 aa).

One can recognise a tr-type G domain in the interval 8-290 (ERYRNIGISA…AVIDFLPSPV (283 aa)). Residues 17-24 (AHIDAGKT), 88-92 (DTPGH), and 142-145 (NKMD) each bind GTP.

Belongs to the TRAFAC class translation factor GTPase superfamily. Classic translation factor GTPase family. EF-G/EF-2 subfamily.

It is found in the cytoplasm. Catalyzes the GTP-dependent ribosomal translocation step during translation elongation. During this step, the ribosome changes from the pre-translocational (PRE) to the post-translocational (POST) state as the newly formed A-site-bound peptidyl-tRNA and P-site-bound deacylated tRNA move to the P and E sites, respectively. Catalyzes the coordinated movement of the two tRNA molecules, the mRNA and conformational changes in the ribosome. The chain is Elongation factor G 1 from Cupriavidus metallidurans (strain ATCC 43123 / DSM 2839 / NBRC 102507 / CH34) (Ralstonia metallidurans).